Consider the following 121-residue polypeptide: MKLKYTNKINKIRTFALSLVFVGILIMYVGIFFKEHPVIMVIAMILGFLAVIASTVVYFFIGLLSTRAVPVICPSCEKQTKVLGRVDACMHCDQPLTMDRSLEGKEFDEAYNSPASKKSQT.

Helical transmembrane passes span threonine 14–lysine 34 and valine 41–isoleucine 61.

The protein belongs to the UPF0295 family.

It localises to the cell membrane. This chain is UPF0295 protein ABC1323, found in Shouchella clausii (strain KSM-K16) (Alkalihalobacillus clausii).